Consider the following 473-residue polypeptide: MANTSHSSQDQFANKAQAWSARFSEPVSDLVKRYTASVDFDKRMARHDIRGSLAHADMLAAQGIISAQDLADIQRGMQQILSEIDAGSFQWLLDLEDVHLNIEKRLVELVGDAGKRLHTGRSRNDQVATDIRLWLRDEIDTLVDLLRQLRHALATVALENAATIMPGFTHLQVAQPVTFGHHLLAYAEMFGRDAERLADCRRRVNRLPLGAAALAGTSYPIDRERVARTLGFDGVCRNSLDAVSDRDFGIEFCAAGALIMTHISRLSEELVLWMSPRVGFIDLADRFCTGSSIMPQKKNPDVPELARGKTGRVNGHLVALLTLMKGQPLAYNKDNQEDKEGLFDTADTLRDTLTIFADMAGGIKVKADNMRAAALQGFATATDLADYLVKRGLPFRDAHEIVAHAVRDCEQRGCDLADLSLADLQAYHPSIGEDIHQVLTLEGSVAARKHIGGTAPERVREEAQRVLAETAGA.

The protein belongs to the lyase 1 family. Argininosuccinate lyase subfamily.

The protein localises to the cytoplasm. The enzyme catalyses 2-(N(omega)-L-arginino)succinate = fumarate + L-arginine. It functions in the pathway amino-acid biosynthesis; L-arginine biosynthesis; L-arginine from L-ornithine and carbamoyl phosphate: step 3/3. The polypeptide is Argininosuccinate lyase (Bordetella pertussis (strain Tohama I / ATCC BAA-589 / NCTC 13251)).